We begin with the raw amino-acid sequence, 171 residues long: 3-hydroxydecanoyl-[acyl-carrier-protein] dehydratase (171 aa).

His-70 is a catalytic residue.

It belongs to the thioester dehydratase family. FabA subfamily. In terms of assembly, homodimer.

The protein resides in the cytoplasm. The enzyme catalyses a (3R)-hydroxyacyl-[ACP] = a (2E)-enoyl-[ACP] + H2O. It carries out the reaction (3R)-hydroxydecanoyl-[ACP] = (2E)-decenoyl-[ACP] + H2O. The catalysed reaction is (2E)-decenoyl-[ACP] = (3Z)-decenoyl-[ACP]. It participates in lipid metabolism; fatty acid biosynthesis. In terms of biological role, necessary for the introduction of cis unsaturation into fatty acids. Catalyzes the dehydration of (3R)-3-hydroxydecanoyl-ACP to E-(2)-decenoyl-ACP and then its isomerization to Z-(3)-decenoyl-ACP. Can catalyze the dehydratase reaction for beta-hydroxyacyl-ACPs with saturated chain lengths up to 16:0, being most active on intermediate chain length. The protein is 3-hydroxydecanoyl-[acyl-carrier-protein] dehydratase of Hydrogenovibrio crunogenus (strain DSM 25203 / XCL-2) (Thiomicrospira crunogena).